Consider the following 551-residue polypeptide: Palmdelphin (551 aa).

Met1 is modified (N-acetylmethionine). A coiled-coil region spans residues 12–106 (QAITDKRKIQ…LQISTKEEAI (95 aa)). Lys125 participates in a covalent cross-link: Glycyl lysine isopeptide (Lys-Gly) (interchain with G-Cter in SUMO2). Ser135 carries the post-translational modification Phosphoserine. A Glycyl lysine isopeptide (Lys-Gly) (interchain with G-Cter in SUMO1); alternate cross-link involves residue Lys179. A Glycyl lysine isopeptide (Lys-Gly) (interchain with G-Cter in SUMO2); alternate cross-link involves residue Lys179. A compositionally biased stretch (basic and acidic residues) spans 248–259 (ERNSKSPTEYHE). The segment at 248–280 (ERNSKSPTEYHEPVYANPFYRPTTPQRETVTPG) is disordered. Residues 270 to 280 (TTPQRETVTPG) show a composition bias toward polar residues. Thr271 carries the post-translational modification Phosphothreonine. Phosphoserine is present on residues Ser321, Ser370, Ser384, and Ser385. Disordered stretches follow at residues 342 to 392 (TPQK…QEDE) and 449 to 535 (DEEE…EDPS). Residues 484–495 (KRSEASPHENTN) are compositionally biased toward basic and acidic residues. Ser498, Ser515, and Ser520 each carry phosphoserine.

It belongs to the paralemmin family. Interacts with GLUL. Post-translationally, phosphorylated. Ubiquitous. Most abundant in cardiac and skeletal muscle.

It is found in the cytoplasm. The protein localises to the cell projection. The protein resides in the dendrite. It localises to the dendritic spine. The chain is Palmdelphin (PALMD) from Homo sapiens (Human).